Consider the following 68-residue polypeptide: DNA-directed RNA polymerase subunit Rpo10 (68 aa).

Zn(2+) contacts are provided by Cys-7, Cys-10, Cys-44, and Cys-45.

Belongs to the archaeal Rpo10/eukaryotic RPB10 RNA polymerase subunit family. In terms of assembly, part of the RNA polymerase complex. The cofactor is Zn(2+).

The protein resides in the cytoplasm. The enzyme catalyses RNA(n) + a ribonucleoside 5'-triphosphate = RNA(n+1) + diphosphate. In terms of biological role, DNA-dependent RNA polymerase (RNAP) catalyzes the transcription of DNA into RNA using the four ribonucleoside triphosphates as substrates. The polypeptide is DNA-directed RNA polymerase subunit Rpo10 (Methanococcus maripaludis (strain DSM 14266 / JCM 13030 / NBRC 101832 / S2 / LL)).